A 372-amino-acid chain; its full sequence is Glutamate 5-kinase (372 aa).

Residue lysine 14 coordinates ATP. Positions 54, 141, and 153 each coordinate substrate. Residues 173-174 (TD) and 215-221 (TGGMSTK) each bind ATP. A PUA domain is found at 280-358 (QGSLVLDAGA…DEIESVLGYD (79 aa)).

Belongs to the glutamate 5-kinase family.

Its subcellular location is the cytoplasm. It catalyses the reaction L-glutamate + ATP = L-glutamyl 5-phosphate + ADP. It functions in the pathway amino-acid biosynthesis; L-proline biosynthesis; L-glutamate 5-semialdehyde from L-glutamate: step 1/2. Its function is as follows. Catalyzes the transfer of a phosphate group to glutamate to form L-glutamate 5-phosphate. In Shewanella oneidensis (strain ATCC 700550 / JCM 31522 / CIP 106686 / LMG 19005 / NCIMB 14063 / MR-1), this protein is Glutamate 5-kinase.